A 647-amino-acid chain; its full sequence is Acetyl-coenzyme A synthetase (647 aa).

CoA is bound by residues 190–193 and T310; that span reads RGGR. Residues 386–388, 410–415, D499, and R514 each bind ATP; these read GEP and DTWWQT. S522 is a CoA binding site. ATP is bound at residue R525. Positions 536, 538, and 541 each coordinate Mg(2+). R583 contacts CoA. The residue at position 608 (K608) is an N6-acetyllysine.

This sequence belongs to the ATP-dependent AMP-binding enzyme family. Requires Mg(2+) as cofactor. In terms of processing, acetylated. Deacetylation by the SIR2-homolog deacetylase activates the enzyme.

The catalysed reaction is acetate + ATP + CoA = acetyl-CoA + AMP + diphosphate. Its function is as follows. Catalyzes the conversion of acetate into acetyl-CoA (AcCoA), an essential intermediate at the junction of anabolic and catabolic pathways. AcsA undergoes a two-step reaction. In the first half reaction, AcsA combines acetate with ATP to form acetyl-adenylate (AcAMP) intermediate. In the second half reaction, it can then transfer the acetyl group from AcAMP to the sulfhydryl group of CoA, forming the product AcCoA. The chain is Acetyl-coenzyme A synthetase from Xylella fastidiosa (strain 9a5c).